A 138-amino-acid chain; its full sequence is HTH-type transcriptional regulator CueR (138 aa).

Positions 1-69 (MNISDVAKKT…LEECGELVNL (69 aa)) constitute an HTH merR-type domain. The H-T-H motif DNA-binding region spans 4 to 23 (SDVAKKTGLTSKAIRFYEEK). Residues cysteine 112 and cysteine 120 each contribute to the Cu(+) site.

In terms of assembly, homodimer.

The protein resides in the cytoplasm. Regulates the transcription of the copA and cueO genes. It detects cytoplasmic copper stress and activates transcription in response to increasing copper concentrations. This Salmonella typhi protein is HTH-type transcriptional regulator CueR (cueR).